Consider the following 123-residue polypeptide: Large ribosomal subunit protein bL12 (123 aa).

The protein belongs to the bacterial ribosomal protein bL12 family. As to quaternary structure, homodimer. Part of the ribosomal stalk of the 50S ribosomal subunit. Forms a multimeric L10(L12)X complex, where L10 forms an elongated spine to which 2 to 4 L12 dimers bind in a sequential fashion. Binds GTP-bound translation factors.

Its function is as follows. Forms part of the ribosomal stalk which helps the ribosome interact with GTP-bound translation factors. Is thus essential for accurate translation. The sequence is that of Large ribosomal subunit protein bL12 from Maricaulis maris (strain MCS10) (Caulobacter maris).